Here is a 398-residue protein sequence, read N- to C-terminus: Basic helix-loop-helix neural transcription factor TAP (398 aa).

2 disordered regions span residues 35–59 and 102–144; these read ETEAQLSSRRRLDFGTPPTPAIPQP and RATN…RSRS. Basic residues predominate over residues 127–141; the sequence is RPKRKYAVGKNRVTR. One can recognise a bHLH domain in the interval 154–206; it reads FRRMKANDRERNRMHNLNDALEKLRVTLPSLPEETKLTKIEILRFAHNYIFAL. 2 disordered regions span residues 265–333 and 361–398; these read AQHQ…QQFS and QQSSFYSQTPPWKDYPEDQAHVHPVPHQHSYKNFAPQV. Positions 307–333 are enriched in low complexity; it reads HQQQQQPHQPHHLQPNPQQESSPQQFS. The span at 361–370 shows a compositional bias: polar residues; that stretch reads QQSSFYSQTP.

Expressed in neuronal and glial precursors during differentiation. In the peripheral nervous system, expression is exclusively in one of the neurons that innervate each larval chemosensory organ. Expressed at a late stage in the development of one type of adult chemosensory organ, the gustatory bristles of the leg, wing and proboscis. Expressed very early in the development of a second type of chemosensory receptors, the olfactory organs of the antenna.

The protein resides in the nucleus. Functionally, may play a role in the specification of the sugar-sensitive adult gustatory neuron and affect the response to sugar and salt. Regulated by POXN. This Drosophila melanogaster (Fruit fly) protein is Basic helix-loop-helix neural transcription factor TAP (tap).